The chain runs to 140 residues: uncharacterized protein (140 aa).

Asn-86 carries an N-linked (GlcNAc...) asparagine; by host glycan. The chain crosses the membrane as a helical span at residues 92–112; the sequence is IFNGLGFILIVIFIYLLLITL.

It belongs to the asfivirus B117L family.

The protein resides in the host membrane. It is found in the virion. This is an uncharacterized protein from African swine fever virus (isolate Pig/Kenya/KEN-50/1950) (ASFV).